Reading from the N-terminus, the 325-residue chain is Ribose-phosphate pyrophosphokinase 2 (325 aa).

96–101 lines the ATP pocket; the sequence is RQDKKD. Positions 135, 137, 146, and 150 each coordinate Mg(2+). Position 137 (His137) interacts with ATP. A binding of phosphoribosylpyrophosphate region spans residues 219 to 234; that stretch reads KDRVAILVDDMADTCG.

Belongs to the ribose-phosphate pyrophosphokinase family. As to quaternary structure, homodimer. The active form is probably a hexamer composed of 3 homodimers. It depends on Mg(2+) as a cofactor.

It catalyses the reaction D-ribose 5-phosphate + ATP = 5-phospho-alpha-D-ribose 1-diphosphate + AMP + H(+). Its pathway is metabolic intermediate biosynthesis; 5-phospho-alpha-D-ribose 1-diphosphate biosynthesis; 5-phospho-alpha-D-ribose 1-diphosphate from D-ribose 5-phosphate (route I): step 1/1. Activated by magnesium and inorganic phosphate. Competitively or non-competitively inhibited by ADP, 2,3-bisphosphoglyceride or GDP. In terms of biological role, catalyzes the synthesis of phosphoribosylpyrophosphate (PRPP) that is essential for nucleotide synthesis. The protein is Ribose-phosphate pyrophosphokinase 2 (PRPS2) of Gallus gallus (Chicken).